Consider the following 134-residue polypeptide: Transcription antitermination protein NusB (134 aa).

This sequence belongs to the NusB family.

In terms of biological role, involved in transcription antitermination. Required for transcription of ribosomal RNA (rRNA) genes. Binds specifically to the boxA antiterminator sequence of the ribosomal RNA (rrn) operons. This Shewanella sediminis (strain HAW-EB3) protein is Transcription antitermination protein NusB.